We begin with the raw amino-acid sequence, 149 residues long: Ribosome-binding factor A (149 aa).

Positions 123–149 (LAKLREGAAPAGDADPYKTSSKSESEE) are disordered.

Belongs to the RbfA family. As to quaternary structure, monomer. Binds 30S ribosomal subunits, but not 50S ribosomal subunits or 70S ribosomes.

The protein localises to the cytoplasm. Its function is as follows. One of several proteins that assist in the late maturation steps of the functional core of the 30S ribosomal subunit. Associates with free 30S ribosomal subunits (but not with 30S subunits that are part of 70S ribosomes or polysomes). Required for efficient processing of 16S rRNA. May interact with the 5'-terminal helix region of 16S rRNA. In Corynebacterium glutamicum (strain ATCC 13032 / DSM 20300 / JCM 1318 / BCRC 11384 / CCUG 27702 / LMG 3730 / NBRC 12168 / NCIMB 10025 / NRRL B-2784 / 534), this protein is Ribosome-binding factor A.